Here is a 65-residue protein sequence, read N- to C-terminus: Cell death protein rpr (65 aa).

As to quaternary structure, interacts with Diap2 (via BIR2 domain).

In terms of biological role, activator of apoptosis, as well as grim and hid, that acts on the effector Dredd. This is Cell death protein rpr (rpr) from Drosophila melanogaster (Fruit fly).